The sequence spans 447 residues: DNA primase DnaG (447 aa).

Positions 200 to 274 constitute a Toprim domain; it reads DSIIVVEGRA…DIDYVARAPE (75 aa). The Mg(2+) site is built by E206, D248, and D250.

The protein belongs to the archaeal DnaG primase family. As to quaternary structure, forms a ternary complex with MCM helicase and DNA. Component of the archaeal exosome complex. Mg(2+) is required as a cofactor.

The enzyme catalyses ssDNA + n NTP = ssDNA/pppN(pN)n-1 hybrid + (n-1) diphosphate.. Its function is as follows. RNA polymerase that catalyzes the synthesis of short RNA molecules used as primers for DNA polymerase during DNA replication. Also part of the exosome, which is a complex involved in RNA degradation. Acts as a poly(A)-binding protein that enhances the interaction between heteromeric, adenine-rich transcripts and the exosome. This is DNA primase DnaG from Pyrococcus horikoshii (strain ATCC 700860 / DSM 12428 / JCM 9974 / NBRC 100139 / OT-3).